Reading from the N-terminus, the 301-residue chain is Acetylglutamate kinase (301 aa).

Substrate is bound by residues 76–77, R98, and N192; that span reads GG.

The protein belongs to the acetylglutamate kinase family. ArgB subfamily.

It is found in the cytoplasm. It carries out the reaction N-acetyl-L-glutamate + ATP = N-acetyl-L-glutamyl 5-phosphate + ADP. It functions in the pathway amino-acid biosynthesis; L-arginine biosynthesis; N(2)-acetyl-L-ornithine from L-glutamate: step 2/4. Functionally, catalyzes the ATP-dependent phosphorylation of N-acetyl-L-glutamate. The protein is Acetylglutamate kinase of Chlorobaculum parvum (strain DSM 263 / NCIMB 8327) (Chlorobium vibrioforme subsp. thiosulfatophilum).